A 515-amino-acid polypeptide reads, in one-letter code: GMP synthase [glutamine-hydrolyzing] (515 aa).

The Glutamine amidotransferase type-1 domain maps to 6 to 198; it reads KVIIIDYGSQ…LFHVAKLKAD (193 aa). The Nucleophile role is filled by Cys-83. Residues His-172 and Glu-174 contribute to the active site. One can recognise a GMPS ATP-PPase domain in the interval 199–390; the sequence is WTMSSFVERA…LGLPDFIIWR (192 aa). 226 to 232 serves as a coordination point for ATP; sequence SGGIDST.

In terms of assembly, homodimer.

The enzyme catalyses XMP + L-glutamine + ATP + H2O = GMP + L-glutamate + AMP + diphosphate + 2 H(+). The protein operates within purine metabolism; GMP biosynthesis; GMP from XMP (L-Gln route): step 1/1. Functionally, catalyzes the synthesis of GMP from XMP. This Nitratidesulfovibrio vulgaris (strain DSM 19637 / Miyazaki F) (Desulfovibrio vulgaris) protein is GMP synthase [glutamine-hydrolyzing].